An 854-amino-acid polypeptide reads, in one-letter code: Translation initiation factor IF-2 (854 aa).

Disordered stretches follow at residues 52-79 and 128-265; these read RQHGEEGDNSQRITLQRKTTSTLSRDGG and RKQE…HGFQ. The segment covering 61–75 has biased composition (polar residues); sequence SQRITLQRKTTSTLS. Composition is skewed to basic and acidic residues over residues 128 to 150 and 211 to 232; these read RKQEEEKAAKAKAEAEEKARQEA and VRHDNDKDKDKPRGRVNPDNKR. Basic residues predominate over residues 247-257; it reads RGKLGRKNKKP. One can recognise a tr-type G domain in the interval 354-523; that stretch reads KRAPVVTVMG…LLQAEVLELT (170 aa). Residues 363 to 370 are G1; that stretch reads GHVDHGKT. 363-370 contacts GTP; it reads GHVDHGKT. The tract at residues 388–392 is G2; sequence GITQH. The interval 409-412 is G3; it reads DTPG. 409–413 is a GTP binding site; sequence DTPGH. A G4 region spans residues 463-466; that stretch reads TKID. The segment at 499–501 is G5; that stretch reads SAK.

Belongs to the TRAFAC class translation factor GTPase superfamily. Classic translation factor GTPase family. IF-2 subfamily.

Its subcellular location is the cytoplasm. In terms of biological role, one of the essential components for the initiation of protein synthesis. Protects formylmethionyl-tRNA from spontaneous hydrolysis and promotes its binding to the 30S ribosomal subunits. Also involved in the hydrolysis of GTP during the formation of the 70S ribosomal complex. This chain is Translation initiation factor IF-2, found in Marinomonas sp. (strain MWYL1).